Consider the following 443-residue polypeptide: Glutamate--tRNA ligase 2 (443 aa).

The short motif at 7–17 (PSPTGYLHVGN) is the 'HIGH' region element. A 'KMSKS' region motif is present at residues 236-240 (KISKR). Lys239 contacts ATP.

Belongs to the class-I aminoacyl-tRNA synthetase family. Glutamate--tRNA ligase type 1 subfamily. In terms of assembly, monomer.

Its subcellular location is the cytoplasm. It carries out the reaction tRNA(Glu) + L-glutamate + ATP = L-glutamyl-tRNA(Glu) + AMP + diphosphate. Its function is as follows. Catalyzes the attachment of glutamate to tRNA(Glu) in a two-step reaction: glutamate is first activated by ATP to form Glu-AMP and then transferred to the acceptor end of tRNA(Glu). The polypeptide is Glutamate--tRNA ligase 2 (Ehrlichia canis (strain Jake)).